The following is a 686-amino-acid chain: Putative pentatricopeptide repeat-containing protein At3g49142 (686 aa).

12 PPR repeats span residues 73 to 103, 104 to 138, 139 to 173, 174 to 204, 205 to 239, 240 to 272, 273 to 307, 308 to 342, 343 to 373, 374 to 408, 409 to 439, and 445 to 475; these read NSSL…IPER, NVII…NVRP, DHYT…GLSS, TLFV…MSRR, DVVS…KISH, DAGT…MGKK, SLVS…GFEP, DAVS…KLIP, NLLL…MKSR, DVVS…GLVP, DSIA…MTDH, and RLEH…MSME. Positions 480–555 are type E motif; that stretch reads VWGALLGACR…NPGASNVEVN (76 aa). The segment at 556–586 is type E(+) motif; the sequence is RIIHTFLVGDRSHPQSDEIYRELDVLVKKMK. Positions 587–686 are type DYW motif; it reads ELGYVPDSES…FGVCSCGDYW (100 aa).

The protein belongs to the PPR family. PCMP-H subfamily.

In Arabidopsis thaliana (Mouse-ear cress), this protein is Putative pentatricopeptide repeat-containing protein At3g49142 (PCMP-H77).